The primary structure comprises 467 residues: Argininosuccinate lyase (467 aa).

Belongs to the lyase 1 family. Argininosuccinate lyase subfamily.

The protein localises to the cytoplasm. It catalyses the reaction 2-(N(omega)-L-arginino)succinate = fumarate + L-arginine. Its pathway is amino-acid biosynthesis; L-arginine biosynthesis; L-arginine from L-ornithine and carbamoyl phosphate: step 3/3. The chain is Argininosuccinate lyase from Campylobacter curvus (strain 525.92).